The following is a 306-amino-acid chain: Mitochondrial substrate carrier family protein M (306 aa).

Residues 1–10 (MRYILNNNVE) lie on the Mitochondrial intermembrane side of the membrane. 3 Solcar repeats span residues 5–98 (LNNN…YKNI), 108–195 (LNTF…IKFY), and 207–299 (LNAS…IKKS). The helical transmembrane segment at 11-31 (GTSALLGSTVATAFLQPFDFL) threads the bilayer. Residues 32–72 (KIRLQGSGFASGGDLNKFKRVGVIDTCKNVLKNEGIKQFWR) are Mitochondrial matrix-facing. A helical membrane pass occupies residues 73–89 (GSSPTIVASGIAWGTYM). Topologically, residues 90–113 (HFYEAYKNILKSKYNVTQLNTFDH) are mitochondrial intermembrane. The chain crosses the membrane as a helical span at residues 114 to 134 (FICAVGASATQVFITNPIFLI). Residues 135 to 163 (KTRMQLQTPGSANYYTGIFDGIKKTVKVE) are Mitochondrial matrix-facing. The chain crosses the membrane as a helical span at residues 164–184 (GFKGLYKGVIPSLWLTFHGGI). Residues 185–211 (QMSSYEHIKFYFSSNSGKSLDSLNASE) are Mitochondrial intermembrane-facing. Residues 212 to 232 (IFIASSISKFLASTILYPFQV) form a helical membrane-spanning segment. At 233–278 (VKTRLQDERNIPNQNNVRVYNGTKDVIFKILKNEGIIGFYRGLVPN) the chain is on the mitochondrial matrix side. The chain crosses the membrane as a helical span at residues 279–296 (TLKVIPNTSITLLLYEEI). The Mitochondrial intermembrane portion of the chain corresponds to 297–306 (KKSFNYIINE).

This sequence belongs to the mitochondrial carrier (TC 2.A.29) family.

It is found in the mitochondrion inner membrane. Its function is as follows. Mitochondrial solute carriers shuttle metabolites, nucleotides, and cofactors through the mitochondrial inner membrane. Transports folate across the inner membranes of mitochondria. The sequence is that of Mitochondrial substrate carrier family protein M (mcfM) from Dictyostelium discoideum (Social amoeba).